A 341-amino-acid chain; its full sequence is Peroxisomal membrane protein PEX14 (341 aa).

N-acetylserine is present on serine 2. Positions 86 to 94 (PPTLPHRDW) match the SH3-binding motif. Residues 276–341 (MQEESDKEKE…QNGQVEDSIP (66 aa)) form a disordered region. Basic and acidic residues predominate over residues 279-295 (ESDKEKENGSDANKDDN). The span at 308 to 341 (IDSNASIPEWQKNTAANEISVPDWQNGQVEDSIP) shows a compositional bias: polar residues. At serine 313 the chain carries Phosphoserine.

The protein belongs to the peroxin-14 family. As to quaternary structure, interacts with PEX13 (via SH3 domain); forming the PEX13-PEX14 docking complex. Interacts with PEX5 (via WxxxF/Y motifs). Interacts with PEX7. Interacts with PEX9.

The protein localises to the peroxisome membrane. Functionally, component of the PEX13-PEX14 docking complex, a translocon channel that specifically mediates the import of peroxisomal cargo proteins bound to PEX5 or PEX21 receptors. The PEX13-PEX14 docking complex forms a large import pore which can be opened to a diameter of about 9 nm. Mechanistically, PEX5 (or PEX21) receptor along with cargo proteins associates with the PEX14 subunit of the PEX13-PEX14 docking complex in the cytosol, leading to the insertion of the receptor into the organelle membrane with the concomitant translocation of the cargo into the peroxisome matrix. This is Peroxisomal membrane protein PEX14 from Saccharomyces cerevisiae (strain ATCC 204508 / S288c) (Baker's yeast).